Here is a 208-residue protein sequence, read N- to C-terminus: Small ribosomal subunit protein uS4 (208 aa).

The S4 RNA-binding domain occupies 98 to 161 (RRLDNVVYRL…KASPRIKELV (64 aa)).

This sequence belongs to the universal ribosomal protein uS4 family. As to quaternary structure, part of the 30S ribosomal subunit. Contacts protein S5. The interaction surface between S4 and S5 is involved in control of translational fidelity.

One of the primary rRNA binding proteins, it binds directly to 16S rRNA where it nucleates assembly of the body of the 30S subunit. In terms of biological role, with S5 and S12 plays an important role in translational accuracy. The chain is Small ribosomal subunit protein uS4 from Desulforamulus reducens (strain ATCC BAA-1160 / DSM 100696 / MI-1) (Desulfotomaculum reducens).